We begin with the raw amino-acid sequence, 185 residues long: Ribosome-recycling factor (185 aa).

It belongs to the RRF family.

Its subcellular location is the cytoplasm. Its function is as follows. Responsible for the release of ribosomes from messenger RNA at the termination of protein biosynthesis. May increase the efficiency of translation by recycling ribosomes from one round of translation to another. This Pseudomonas fluorescens (strain Pf0-1) protein is Ribosome-recycling factor.